We begin with the raw amino-acid sequence, 143 residues long: Phosphatidylethanolamine-binding protein homolog R644 (143 aa).

This sequence belongs to the phosphatidylethanolamine-binding protein family.

Its subcellular location is the virion. This Acanthamoeba polyphaga mimivirus (APMV) protein is Phosphatidylethanolamine-binding protein homolog R644.